Reading from the N-terminus, the 397-residue chain is Elongation factor Tu (397 aa).

A tr-type G domain is found at 10–207; that stretch reads LPHVNVGTIG…TLDSYIPEPE (198 aa). The interval 19–26 is G1; sequence GHVDHGKT. 19-26 is a binding site for GTP; that stretch reads GHVDHGKT. Thr-26 serves as a coordination point for Mg(2+). The segment at 60-64 is G2; the sequence is GITIN. The segment at 81–84 is G3; the sequence is DCPG. GTP-binding positions include 81–85 and 136–139; these read DCPGH and NKAD. The interval 136-139 is G4; it reads NKAD. The G5 stretch occupies residues 174-176; it reads SAR.

It belongs to the TRAFAC class translation factor GTPase superfamily. Classic translation factor GTPase family. EF-Tu/EF-1A subfamily. As to quaternary structure, monomer.

It localises to the cytoplasm. The enzyme catalyses GTP + H2O = GDP + phosphate + H(+). In terms of biological role, GTP hydrolase that promotes the GTP-dependent binding of aminoacyl-tRNA to the A-site of ribosomes during protein biosynthesis. The chain is Elongation factor Tu from Pseudomonas fluorescens (strain Pf0-1).